The chain runs to 394 residues: Elongation factor Tu (394 aa).

The tr-type G domain occupies 10–204 (KPHVNVGTIG…AVDEWIPTPT (195 aa)). Residues 19 to 26 (GHIDHGKT) are G1. 19–26 (GHIDHGKT) serves as a coordination point for GTP. Mg(2+) is bound at residue Thr-26. The interval 60–64 (GITIN) is G2. Positions 81-84 (DCPG) are G3. Residues 81-85 (DCPGH) and 136-139 (NKCD) each bind GTP. The G4 stretch occupies residues 136–139 (NKCD). The segment at 174 to 176 (SAL) is G5.

This sequence belongs to the TRAFAC class translation factor GTPase superfamily. Classic translation factor GTPase family. EF-Tu/EF-1A subfamily. Monomer.

The protein localises to the cytoplasm. It carries out the reaction GTP + H2O = GDP + phosphate + H(+). In terms of biological role, GTP hydrolase that promotes the GTP-dependent binding of aminoacyl-tRNA to the A-site of ribosomes during protein biosynthesis. The protein is Elongation factor Tu of Mycoplasma genitalium (strain ATCC 33530 / DSM 19775 / NCTC 10195 / G37) (Mycoplasmoides genitalium).